We begin with the raw amino-acid sequence, 141 residues long: MSVNSNAYDAGIMGLKGKDFADQFFADENQVVHESDTVVLVLKKSDEINTFIEEILLTDYKKNVNPTVNVEDRAGYWWIKANGKIEVDCDEISELLGRQFNVYDFLVDVSSTIGRAYTLGNKFTITSELMGLDRKLEDYHA.

The protein belongs to the TmoD/XamoD family. As to quaternary structure, the soluble methane monooxygenase (sMMO) consists of four components A/MMOH (composed of alpha/MmoX, beta/MmoY and gamma/MmoZ), B/MMOB (MmoB), C/MMOR (MmoC) and D/MMOD (MmoD).

In terms of biological role, the B protein acts as a regulator of electron flow through the soluble mmo complex, switching the enzyme from an oxidase to a hydroxylase in the presence of the substrate. In Methylococcus capsulatus (strain ATCC 33009 / NCIMB 11132 / Bath), this protein is Methane monooxygenase regulatory protein B (mmoB).